A 290-amino-acid chain; its full sequence is Bifunctional protein FolD (290 aa).

NADP(+)-binding positions include 165-167, serine 190, and isoleucine 231; that span reads GRS.

Belongs to the tetrahydrofolate dehydrogenase/cyclohydrolase family. Homodimer.

The enzyme catalyses (6R)-5,10-methylene-5,6,7,8-tetrahydrofolate + NADP(+) = (6R)-5,10-methenyltetrahydrofolate + NADPH. It carries out the reaction (6R)-5,10-methenyltetrahydrofolate + H2O = (6R)-10-formyltetrahydrofolate + H(+). The protein operates within one-carbon metabolism; tetrahydrofolate interconversion. Its function is as follows. Catalyzes the oxidation of 5,10-methylenetetrahydrofolate to 5,10-methenyltetrahydrofolate and then the hydrolysis of 5,10-methenyltetrahydrofolate to 10-formyltetrahydrofolate. This Aromatoleum aromaticum (strain DSM 19018 / LMG 30748 / EbN1) (Azoarcus sp. (strain EbN1)) protein is Bifunctional protein FolD.